Here is a 518-residue protein sequence, read N- to C-terminus: 3-octaprenyl-4-hydroxybenzoate carboxy-lyase (518 aa).

Asparagine 177 provides a ligand contact to Mn(2+). Residues 180–182 (IYR), 194–196 (RWL), and 199–200 (RG) each bind prenylated FMN. A Mn(2+)-binding site is contributed by glutamate 243. Catalysis depends on aspartate 318, which acts as the Proton donor.

This sequence belongs to the UbiD family. In terms of assembly, homohexamer. It depends on prenylated FMN as a cofactor. Mn(2+) is required as a cofactor.

It is found in the cell membrane. It catalyses the reaction a 4-hydroxy-3-(all-trans-polyprenyl)benzoate + H(+) = a 2-(all-trans-polyprenyl)phenol + CO2. Its pathway is cofactor biosynthesis; ubiquinone biosynthesis. Functionally, catalyzes the decarboxylation of 3-octaprenyl-4-hydroxy benzoate to 2-octaprenylphenol, an intermediate step in ubiquinone biosynthesis. The polypeptide is 3-octaprenyl-4-hydroxybenzoate carboxy-lyase (Burkholderia multivorans (strain ATCC 17616 / 249)).